The sequence spans 310 residues: Methionyl-tRNA formyltransferase (310 aa).

(6S)-5,6,7,8-tetrahydrofolate is bound at residue 109–112 (SLLP).

It belongs to the Fmt family.

It catalyses the reaction L-methionyl-tRNA(fMet) + (6R)-10-formyltetrahydrofolate = N-formyl-L-methionyl-tRNA(fMet) + (6S)-5,6,7,8-tetrahydrofolate + H(+). Attaches a formyl group to the free amino group of methionyl-tRNA(fMet). The formyl group appears to play a dual role in the initiator identity of N-formylmethionyl-tRNA by promoting its recognition by IF2 and preventing the misappropriation of this tRNA by the elongation apparatus. The protein is Methionyl-tRNA formyltransferase of Parvibaculum lavamentivorans (strain DS-1 / DSM 13023 / NCIMB 13966).